The following is a 139-amino-acid chain: Large ribosomal subunit protein uL16 (139 aa).

The segment covering 1–16 (MLIPKRTKYRKQHRPV) has biased composition (basic residues). A disordered region spans residues 1–22 (MLIPKRTKYRKQHRPVRSGMSK).

This sequence belongs to the universal ribosomal protein uL16 family. In terms of assembly, part of the 50S ribosomal subunit.

Its function is as follows. Binds 23S rRNA and is also seen to make contacts with the A and possibly P site tRNAs. The protein is Large ribosomal subunit protein uL16 of Bifidobacterium longum (strain DJO10A).